The sequence spans 232 residues: tRNA (guanine-N(7)-)-methyltransferase (232 aa).

Residues Glu-63, Glu-88, Asp-115, and Asp-137 each coordinate S-adenosyl-L-methionine. Asp-137 is an active-site residue. Residues Lys-141, Asp-173, and 211–214 contribute to the substrate site; that span reads TRYE.

This sequence belongs to the class I-like SAM-binding methyltransferase superfamily. TrmB family.

The enzyme catalyses guanosine(46) in tRNA + S-adenosyl-L-methionine = N(7)-methylguanosine(46) in tRNA + S-adenosyl-L-homocysteine. The protein operates within tRNA modification; N(7)-methylguanine-tRNA biosynthesis. In terms of biological role, catalyzes the formation of N(7)-methylguanine at position 46 (m7G46) in tRNA. The protein is tRNA (guanine-N(7)-)-methyltransferase of Agrobacterium fabrum (strain C58 / ATCC 33970) (Agrobacterium tumefaciens (strain C58)).